A 334-amino-acid polypeptide reads, in one-letter code: Beta-glucanase (334 aa).

The N-terminal stretch at 1-27 (MKNRVISLLMASLLLVLSVIVAPFYKA) is a signal peptide. Residues 28 to 248 (EAATVVNTPF…YVKYYPNGVP (221 aa)) enclose the GH16 domain. Glu136 acts as the Nucleophile in catalysis. Catalysis depends on Glu140, which acts as the Proton donor. The tract at residues 246–265 (GVPQDNPTPTPTIAPSTPTN) is disordered. The region spanning 267–334 (NLPLKGDVNG…RYLIRAIPSL (68 aa)) is the Dockerin domain.

It belongs to the glycosyl hydrolase 16 family.

The catalysed reaction is Hydrolysis of (1-&gt;4)-beta-D-glucosidic linkages in beta-D-glucans containing (1-&gt;3)- and (1-&gt;4)-bonds.. The chain is Beta-glucanase (licB) from Acetivibrio thermocellus (Hungateiclostridium thermocellum).